The primary structure comprises 365 residues: Putrescine 2-hydroxylase (365 aa).

Positions 44–141 (GHELMVPEVG…LQNWNGLLFE (98 aa)) constitute a Rieske domain. Cysteine 81, histidine 83, cysteine 100, and histidine 103 together coordinate [2Fe-2S] cluster.

It belongs to the bacterial ring-hydroxylating dioxygenase alpha subunit family. [2Fe-2S] cluster serves as cofactor.

Functionally, rieske-type iron sulfur protein that can catalyze in vitro the 2-hydroxylation of putrescine, forming 2-hydroxyputrescine. May be involved in the biosynthesis of the cyclic hydroxamate siderophore alcaligin. The chain is Putrescine 2-hydroxylase from Ralstonia nicotianae (strain ATCC BAA-1114 / GMI1000) (Ralstonia solanacearum).